The primary structure comprises 233 residues: Tropomyosin (233 aa).

Residues 6 to 222 adopt a coiled-coil conformation; that stretch reads FDTVNEKYQE…KERYKAISDE (217 aa). Residues 48–88 are disordered; the sequence is MERSEERLQTATEKLEEASKAADESERNRKVLENLNNASEE. Residues 51 to 79 show a composition bias toward basic and acidic residues; sequence SEERLQTATEKLEEASKAADESERNRKVL.

This sequence belongs to the tropomyosin family. Homodimer.

In terms of biological role, tropomyosin, in association with the troponin complex, plays a central role in the calcium dependent regulation of muscle contraction. In Magallana gigas (Pacific oyster), this protein is Tropomyosin.